Consider the following 220-residue polypeptide: 7-cyano-7-deazaguanine synthase (220 aa).

Residue Val11 to Met21 coordinates ATP. The Zn(2+) site is built by Cys186, Cys194, Cys197, and Cys200.

Belongs to the QueC family. It depends on Zn(2+) as a cofactor.

The enzyme catalyses 7-carboxy-7-deazaguanine + NH4(+) + ATP = 7-cyano-7-deazaguanine + ADP + phosphate + H2O + H(+). It participates in purine metabolism; 7-cyano-7-deazaguanine biosynthesis. Functionally, catalyzes the ATP-dependent conversion of 7-carboxy-7-deazaguanine (CDG) to 7-cyano-7-deazaguanine (preQ(0)). This chain is 7-cyano-7-deazaguanine synthase, found in Porphyromonas gingivalis (strain ATCC BAA-308 / W83).